The following is a 355-amino-acid chain: UDP-N-acetylglucosamine--N-acetylmuramyl-(pentapeptide) pyrophosphoryl-undecaprenol N-acetylglucosamine transferase (355 aa).

Residues 14–16 (TGG), asparagine 126, arginine 162, serine 190, isoleucine 244, and glutamine 289 each bind UDP-N-acetyl-alpha-D-glucosamine.

Belongs to the glycosyltransferase 28 family. MurG subfamily.

It localises to the cell inner membrane. It catalyses the reaction di-trans,octa-cis-undecaprenyl diphospho-N-acetyl-alpha-D-muramoyl-L-alanyl-D-glutamyl-meso-2,6-diaminopimeloyl-D-alanyl-D-alanine + UDP-N-acetyl-alpha-D-glucosamine = di-trans,octa-cis-undecaprenyl diphospho-[N-acetyl-alpha-D-glucosaminyl-(1-&gt;4)]-N-acetyl-alpha-D-muramoyl-L-alanyl-D-glutamyl-meso-2,6-diaminopimeloyl-D-alanyl-D-alanine + UDP + H(+). The protein operates within cell wall biogenesis; peptidoglycan biosynthesis. In terms of biological role, cell wall formation. Catalyzes the transfer of a GlcNAc subunit on undecaprenyl-pyrophosphoryl-MurNAc-pentapeptide (lipid intermediate I) to form undecaprenyl-pyrophosphoryl-MurNAc-(pentapeptide)GlcNAc (lipid intermediate II). This chain is UDP-N-acetylglucosamine--N-acetylmuramyl-(pentapeptide) pyrophosphoryl-undecaprenol N-acetylglucosamine transferase, found in Paracidovorax citrulli (strain AAC00-1) (Acidovorax citrulli).